We begin with the raw amino-acid sequence, 615 residues long: Medium-chain acyl-CoA ligase ACSF2, mitochondrial (615 aa).

The transit peptide at 1–41 (MAVYHGMLRFGRLCIASLGARGPRTLLSRPRPNSKLQSVRA) directs the protein to the mitochondrion. K179 carries the N6-acetyllysine modification. An N6-acetyllysine; alternate modification is found at K182. An N6-succinyllysine; alternate modification is found at K182. Residue K199 is modified to N6-acetyllysine. 263–271 (TSGTTGNPK) contributes to the ATP binding site. K340 and K398 each carry N6-acetyllysine. The residue at position 478 (K478) is an N6-succinyllysine. Positions 493 and 508 each coordinate ATP. An N6-acetyllysine modification is found at K510. 2 positions are modified to N6-acetyllysine; alternate: K544 and K570. N6-succinyllysine; alternate occurs at positions 544 and 570. K599 is a binding site for ATP. Position 599 is an N6-succinyllysine (K599).

Belongs to the ATP-dependent AMP-binding enzyme family.

The protein resides in the mitochondrion. The enzyme catalyses a medium-chain fatty acid + ATP + CoA = a medium-chain fatty acyl-CoA + AMP + diphosphate. The catalysed reaction is octanoate + ATP + CoA = octanoyl-CoA + AMP + diphosphate. In terms of biological role, acyl-CoA synthases catalyze the initial reaction in fatty acid metabolism, by forming a thioester with CoA. Has some preference toward medium-chain substrates. Plays a role in adipocyte differentiation. This chain is Medium-chain acyl-CoA ligase ACSF2, mitochondrial, found in Mus musculus (Mouse).